The sequence spans 326 residues: Meso-diaminopimelate D-dehydrogenase (326 aa).

Residues 11–14 (YGNL), 35–37 (TRR), 69–72 (CGGS), 92–94 (SFD), and 121–125 (VGWDP) contribute to the NADP(+) site. Residues aspartate 94, aspartate 124, tryptophan 148, 154-155 (QG), threonine 173, arginine 199, histidine 249, and asparagine 276 each bind substrate.

This sequence belongs to the diaminopimelate dehydrogenase family. As to quaternary structure, homodimer.

It catalyses the reaction meso-2,6-diaminopimelate + NADP(+) + H2O = (S)-2-amino-6-oxoheptanedioate + NH4(+) + NADPH + H(+). It participates in amino-acid biosynthesis; L-lysine biosynthesis via DAP pathway; DL-2,6-diaminopimelate from (S)-tetrahydrodipicolinate: step 1/1. The enzyme is completely inhibited by p-chloromercuribenzoate and HgCl(2) in vitro. Thioglycollate, L-cysteine and Cu(2+) also strongly inhibit the enzyme. In terms of biological role, catalyzes the reversible NADPH-dependent reductive amination of L-2-amino-6-oxopimelate, the acyclic form of L-tetrahydrodipicolinate, to generate the meso compound, D,L-2,6-diaminopimelate. Probably plays a role in lysine biosynthesis. Is highly specific for meso-2,6-diaminopimelate as the electron donor, since the following amino acids are inert for the oxidative deamination reaction: DL-2-aminopimelate, D-glutamate, L-glutamate, D-aspartate, L-aspartate, D-alanine, L-alanine, D-valine, L-valine, D-lysine, L-lysine, D-phenylalanine, L-phenylalanine, D-leucine, L-leucine, D-threonine, L-threonine, D-serine, L-serine, D-tryptophan, L-tryptophan, D-cysteine, L-cysteine, D-histidine, L-histidine, D-methionine, D-arginine, D-proline, D-asparagine, D-glutamine, D-isoleucine and D-ornithine. Moreover, exclusively uses NADP as the electron acceptor for the oxidative deamination of meso-DAP; NAD is inert. In Ureibacillus thermosphaericus, this protein is Meso-diaminopimelate D-dehydrogenase (ddh).